Consider the following 1181-residue polypeptide: Sodium/potassium/calcium exchanger 1 (1181 aa).

At 1–419 the chain is on the extracellular side; it reads MGKLIRMGTQ…DLFSVEDRRQ (419 aa). 3 disordered regions span residues 107–232, 255–276, and 300–323; these read AMED…TSLK, SLVG…STTP, and STPA…GTST. The segment covering 124 to 136 has biased composition (polar residues); it reads SLKNNYSPTTAGT. The N-linked (GlcNAc...) asparagine glycan is linked to N271. Polar residues predominate over residues 301-311; that stretch reads TPATTEGSTAA. A helical transmembrane segment spans residues 420 to 440; sequence GWVVLHIFGMTYVFVALAIVC. Residues 441–464 lie on the Cytoplasmic side of the membrane; that stretch reads DEYFVPALGVITDKLQISEDVAGA. An Alpha-1 repeat occupies 461–501; the sequence is VAGATFMAAGGSAPELFTSLIGVFISHSNVGIGTIVGSAVF. The chain crosses the membrane as a helical span at residues 465–485; the sequence is TFMAAGGSAPELFTSLIGVFI. Residues 486-491 are Extracellular-facing; it reads SHSNVG. Residues 492 to 512 traverse the membrane as a helical segment; the sequence is IGTIVGSAVFNILFVIGTCAL. Topologically, residues 513 to 519 are cytoplasmic; the sequence is FSREILN. Residues 520–544 traverse the membrane as a helical segment; the sequence is LTWWPLFRDVSFYILDLSMLIVFFL. Residues 545–552 are Extracellular-facing; the sequence is DSLIAWWE. A helical membrane pass occupies residues 553–569; it reads SLLLLLAYALYVFTMKW. Residues 570 to 989 lie on the Cytoplasmic side of the membrane; that stretch reads NKQIERWVKE…SLEWPESRQK (420 aa). A disordered region spans residues 598–617; the sequence is PSDGAIEENEQQDNKKLKLP. S625 is modified (phosphoserine). The tract at residues 650–983 is disordered; the sequence is GEARPSKDKQ…ESEEPLSLEW (334 aa). T690 is modified (phosphothreonine). A compositionally biased stretch (acidic residues) spans 701–715; it reads GDQEEDPGCQEDVDE. A run of 14 repeats spans residues 730–741, 742–754, 755–766, 767–778, 779–791, 792–804, 805–817, 818–830, 831–843, 844–856, 857–869, 870–881, 882–893, and 894–905. 3 stretches are compositionally biased toward basic and acidic residues: residues 730–750, 757–775, and 782–805; these read ETEA…RKED, ETKG…GKDE, and AEGK…HEGE. The segment at 730–905 is 14 X approximate tandem repeats; it reads ETEAEGKKDE…EAGEKDEHEG (176 aa). Residues 806 to 820 are compositionally biased toward acidic residues; it reads TEAEGTEDEQEGETE. Residues 834-906 are compositionally biased toward basic and acidic residues; sequence AEGKEVEHEV…AGEKDEHEGQ (73 aa). Composition is skewed to acidic residues over residues 921 to 931 and 949 to 979; these read GEAEANAEDQC and GDSE…EEPL. The chain crosses the membrane as a helical span at residues 990–1010; that stretch reads QAIYLFLLPIVFPLWLTIPDV. The Extracellular portion of the chain corresponds to 1011-1017; that stretch reads RRQEARK. Residues 1018–1038 form a helical membrane-spanning segment; that stretch reads FFVITFLGSIIWIAMFSYLMV. Over 1039–1053 the chain is Cytoplasmic; that stretch reads WWAHQVGETIGISEE. The chain crosses the membrane as a helical span at residues 1054-1074; sequence IMGLTILAAGTSIPDLITSVI. The Alpha-2 repeat unit spans residues 1061–1092; the sequence is AAGTSIPDLITSVIVARKGLGDMAVSSSVGSN. Residues 1075–1092 are Extracellular-facing; sequence VARKGLGDMAVSSSVGSN. The helical transmembrane segment at 1093-1113 threads the bilayer; that stretch reads IFDITVGLPVPWLLFSLINAL. Residues 1114–1121 are Cytoplasmic-facing; the sequence is QPIPVSSN. The helical transmembrane segment at 1122–1142 threads the bilayer; sequence GLFCAIVLLFLMLLFVIFSIA. Residues 1143–1150 are Extracellular-facing; the sequence is SCKWRMNK. A helical membrane pass occupies residues 1151–1171; it reads ILGFTMFLLYFVFLVISVMLE. The Cytoplasmic portion of the chain corresponds to 1172-1181; sequence DRIISCPVSV.

The protein belongs to the Ca(2+):cation antiporter (CaCA) (TC 2.A.19) family. SLC24A subfamily. The uncleaved signal sequence is required for efficient membrane targeting and proper membrane integration and topology. In terms of tissue distribution, highly expressed in the eye.

The protein resides in the cell membrane. The catalysed reaction is Ca(2+)(out) + K(+)(out) + 4 Na(+)(in) = Ca(2+)(in) + K(+)(in) + 4 Na(+)(out). Calcium, potassium:sodium antiporter that transports 1 Ca(2+) and 1 K(+) in exchange for 4 Na(+). Critical component of the visual transduction cascade, controlling the calcium concentration of outer segments during light and darkness. Light causes a rapid lowering of cytosolic free calcium in the outer segment of both retinal rod and cone photoreceptors and the light-induced lowering of calcium is caused by extrusion via this protein which plays a key role in the process of light adaptation. The polypeptide is Sodium/potassium/calcium exchanger 1 (Slc24a1) (Rattus norvegicus (Rat)).